We begin with the raw amino-acid sequence, 116 residues long: Large ribosomal subunit protein bL17 (116 aa).

It belongs to the bacterial ribosomal protein bL17 family. As to quaternary structure, part of the 50S ribosomal subunit. Contacts protein L32.

This Wolinella succinogenes (strain ATCC 29543 / DSM 1740 / CCUG 13145 / JCM 31913 / LMG 7466 / NCTC 11488 / FDC 602W) (Vibrio succinogenes) protein is Large ribosomal subunit protein bL17.